The sequence spans 208 residues: Histone H1.3 (208 aa).

N-acetylserine is present on Ser2. One can recognise an H15 domain in the interval 37–113; sequence AHPPYINMVT…GASGRFRVTE (77 aa). Residues 113–208 are disordered; the sequence is EKKAAAAKKP…PAKKAVAPKT (96 aa). 2 stretches are compositionally biased toward basic residues: residues 148–158 and 165–191; these read KAKKTTATKTK and KKVKSPKKIAKPTAKKVAKSPAKKSAP. A compositionally biased stretch (low complexity) spans 192–208; sequence KKAAAAKPAKKAVAPKT.

The protein belongs to the histone H1/H5 family.

Its subcellular location is the nucleus. The protein resides in the chromosome. Functionally, histones H1 are necessary for the condensation of nucleosome chains into higher-order structures. The polypeptide is Histone H1.3 (hil-3) (Caenorhabditis elegans).